Consider the following 465-residue polypeptide: Argininosuccinate lyase (465 aa).

This sequence belongs to the lyase 1 family. Argininosuccinate lyase subfamily.

Its subcellular location is the cytoplasm. The catalysed reaction is 2-(N(omega)-L-arginino)succinate = fumarate + L-arginine. Its pathway is amino-acid biosynthesis; L-arginine biosynthesis; L-arginine from L-ornithine and carbamoyl phosphate: step 3/3. This Rhodopseudomonas palustris (strain BisB5) protein is Argininosuccinate lyase.